The following is a 367-amino-acid chain: Forkhead box protein I1-B (367 aa).

Disordered stretches follow at residues Met1–His21 and Asp213–Val274. The segment at residues Arg128 to Lys222 is a DNA-binding region (fork-head). Basic and acidic residues predominate over residues Ala233–Glu246. A compositionally biased stretch (polar residues) spans Thr252–Val274.

As to expression, initially localized to the animal hemisphere (the presumptive ectoderm) of early-mid blastula embryos. Becomes restricted to head placodes, excluding the otic placodes, by the tailbud stages.

It is found in the nucleus. In terms of biological role, transcription factor. Essential for ventral specification of the early cephalic (head) ectoderm during gastrulation, playing a role in the 'non-neural' versus 'neural' cell fate choice. Binds to DNA via the target sequence 5'-[AG]TAAA[CT]A-3', with 5'-ATAAACA-3' being the preferred binding site. The chain is Forkhead box protein I1-B (foxi1-b) from Xenopus laevis (African clawed frog).